Here is a 77-residue protein sequence, read N- to C-terminus: U3-theraphotoxin-Hhn1k (77 aa).

Positions Thr-1–Ala-14 are cleaved as a signal peptide. Positions Ser-15–Arg-42 are excised as a propeptide. 2 disulfides stabilise this stretch: Cys-44–Cys-57 and Cys-56–Cys-69.

It belongs to the neurotoxin 10 (Hwtx-1) family. 51 (Hntx-8) subfamily. Hntx-8 sub-subfamily. As to expression, expressed by the venom gland.

It localises to the secreted. Its function is as follows. Ion channel inhibitor. In Cyriopagopus hainanus (Chinese bird spider), this protein is U3-theraphotoxin-Hhn1k.